Consider the following 212-residue polypeptide: Thymidylate kinase (212 aa).

11–18 lines the ATP pocket; the sequence is GPEGAGKT.

It belongs to the thymidylate kinase family.

The enzyme catalyses dTMP + ATP = dTDP + ADP. In terms of biological role, phosphorylation of dTMP to form dTDP in both de novo and salvage pathways of dTTP synthesis. This chain is Thymidylate kinase, found in Streptococcus pneumoniae (strain Taiwan19F-14).